Here is a 485-residue protein sequence, read N- to C-terminus: Glutamyl-tRNA(Gln) amidotransferase subunit A (485 aa).

Active-site charge relay system residues include Lys-79 and Ser-154. Ser-178 functions as the Acyl-ester intermediate in the catalytic mechanism.

This sequence belongs to the amidase family. GatA subfamily. In terms of assembly, heterotrimer of A, B and C subunits.

It catalyses the reaction L-glutamyl-tRNA(Gln) + L-glutamine + ATP + H2O = L-glutaminyl-tRNA(Gln) + L-glutamate + ADP + phosphate + H(+). Allows the formation of correctly charged Gln-tRNA(Gln) through the transamidation of misacylated Glu-tRNA(Gln) in organisms which lack glutaminyl-tRNA synthetase. The reaction takes place in the presence of glutamine and ATP through an activated gamma-phospho-Glu-tRNA(Gln). The sequence is that of Glutamyl-tRNA(Gln) amidotransferase subunit A from Staphylococcus epidermidis (strain ATCC 35984 / DSM 28319 / BCRC 17069 / CCUG 31568 / BM 3577 / RP62A).